The sequence spans 933 residues: 2-oxoglutarate dehydrogenase E1 component (933 aa).

Belongs to the alpha-ketoglutarate dehydrogenase family. As to quaternary structure, homodimer. Part of the 2-oxoglutarate dehydrogenase (OGDH) complex composed of E1 (2-oxoglutarate dehydrogenase), E2 (dihydrolipoamide succinyltransferase) and E3 (dihydrolipoamide dehydrogenase); the complex contains multiple copies of the three enzymatic components (E1, E2 and E3). Interacts (via N-terminus) with SucB, the E2 component of OGDH complex. Thiamine diphosphate is required as a cofactor.

It catalyses the reaction N(6)-[(R)-lipoyl]-L-lysyl-[protein] + 2-oxoglutarate + H(+) = N(6)-[(R)-S(8)-succinyldihydrolipoyl]-L-lysyl-[protein] + CO2. Its function is as follows. E1 component of the 2-oxoglutarate dehydrogenase (OGDH) complex which catalyzes the decarboxylation of 2-oxoglutarate, the first step in the conversion of 2-oxoglutarate to succinyl-CoA and CO(2). The sequence is that of 2-oxoglutarate dehydrogenase E1 component (sucA) from Escherichia coli O157:H7.